Reading from the N-terminus, the 151-residue chain is UPF0756 membrane protein Dred_1097 (151 aa).

4 consecutive transmembrane segments (helical) span residues 6 to 26 (IILLSLILMGYLAESALLATA), 52 to 72 (VGLIFLMLSVLVPLAHDNIVY), 75 to 95 (LVMKTLSPQGLLALIGGTLAT), and 111 to 131 (LIFGMVIGSLIGIVFLGGIPI).

This sequence belongs to the UPF0756 family.

The protein resides in the cell membrane. This Desulforamulus reducens (strain ATCC BAA-1160 / DSM 100696 / MI-1) (Desulfotomaculum reducens) protein is UPF0756 membrane protein Dred_1097.